Consider the following 49-residue polypeptide: Large ribosomal subunit protein bL33 (49 aa).

This sequence belongs to the bacterial ribosomal protein bL33 family.

The chain is Large ribosomal subunit protein bL33 from Pseudothermotoga lettingae (strain ATCC BAA-301 / DSM 14385 / NBRC 107922 / TMO) (Thermotoga lettingae).